Here is a 221-residue protein sequence, read N- to C-terminus: MSSVFLFISNESGKAIFLISGDVLVKSFCSLSDTCPFQDSCRSCSLLNAAKNYLAGTAPDSRIKTLDGELSAGIGEYKIGKNVLLKVMGLGSCIGVILSDVSTGICGIAHVLLPGASDRGETKYAETAIEKMVEDMVKMGARRSRITAKFAGGAQVFKHMSLDILKIGDRNAISVEETLIKKNIPILAKDVGGEVGRNVIFNPADGSMIVKYTAKGEVLWL.

The protein belongs to the CheD family.

It carries out the reaction L-glutaminyl-[protein] + H2O = L-glutamyl-[protein] + NH4(+). Its function is as follows. Probably deamidates glutamine residues to glutamate on methyl-accepting chemotaxis receptors (MCPs), playing an important role in chemotaxis. In Methanosarcina mazei (strain ATCC BAA-159 / DSM 3647 / Goe1 / Go1 / JCM 11833 / OCM 88) (Methanosarcina frisia), this protein is Probable chemoreceptor glutamine deamidase CheD 1.